Reading from the N-terminus, the 367-residue chain is Serine/threonine-protein phosphatase 2A activator 2 (367 aa).

It belongs to the PTPA-type PPIase family.

Its subcellular location is the cytoplasm. It carries out the reaction [protein]-peptidylproline (omega=180) = [protein]-peptidylproline (omega=0). In terms of biological role, PPIases accelerate the folding of proteins. It catalyzes the cis-trans isomerization of proline imidic peptide bonds in oligopeptides. Acts as a regulatory subunit for PP2A-like phosphatases modulating their activity or substrate specificity, probably by inducing a conformational change in the catalytic subunit, a direct target of the PPIase. Can reactivate inactive phosphatase PP2A-phosphatase methylesterase complexes (PP2Ai) in presence of ATP and Mg(2+) by dissociating the inactive form from the complex. The sequence is that of Serine/threonine-protein phosphatase 2A activator 2 (RRD2) from Debaryomyces hansenii (strain ATCC 36239 / CBS 767 / BCRC 21394 / JCM 1990 / NBRC 0083 / IGC 2968) (Yeast).